The following is a 331-amino-acid chain: 2-hydroxyacid dehydrogenase homolog (331 aa).

NAD(+) contacts are provided by residues histidine 154–isoleucine 155, threonine 234–arginine 236, and aspartate 260. The active site involves arginine 236. Residue glutamate 265 is part of the active site. Residue histidine 297 is the Proton donor of the active site. Residue histidine 297–phenylalanine 300 participates in NAD(+) binding.

The protein belongs to the D-isomer specific 2-hydroxyacid dehydrogenase family.

The protein is 2-hydroxyacid dehydrogenase homolog (ddh) of Zymomonas mobilis subsp. mobilis (strain ATCC 31821 / ZM4 / CP4).